The chain runs to 888 residues: E3 ubiquitin-protein ligase SH3RF1 (888 aa).

An RING-type zinc finger spans residues Cys12–Arg53. 2 SH3 domains span residues Pro134–Pro193 and Gln196–Ala259. The interval Asp275–Arg321 is disordered. An interaction with RAC1 region spans residues His292–Thr362. The residue at position 304 (Ser304) is a Phosphoserine. A compositionally biased stretch (polar residues) spans Phe305–Arg321. Residues His440–Leu543 are interaction with AKT2. The 62-residue stretch at Thr445–Arg506 folds into the SH3 3 domain. Disordered regions lie at residues Val516–Ala549, Ser617–Met637, and Pro693–Thr741. Residues Thr520–Thr535 show a composition bias toward polar residues. Ser532 carries the phosphoserine modification. Polar residues predominate over residues Pro693–Ser704. The span at Lys707–Gly718 shows a compositional bias: basic and acidic residues. Ser735 is subject to Phosphoserine. An SH3 4 domain is found at Val829–Ile888.

The protein belongs to the SH3RF family. As to quaternary structure, interacts with HERP1. Interacts with RAC1; in a GTP-dependent manner. Interacts with MAP3K10/MLK2 and MAP3K11/MLK3. Interacts with MAPK8IP; this interaction leads to the PJAC complex (POSH-JIP or SH3RF1/MAPK8IP apoptotic complex) with a 1:1 ratio. Interacts with SIAH1. Probably part of a signaling complex that may contain SH3RF1, MAPK8IP, DLK1, MAP2K4/MKK4, MAP2K7/MKK7, MAPK8/JNK1, MAPK9/JNK2, AKT1 and AKT2. Found in a complex with RAC2, MAP3K7/TAK1, MAP2K7/MKK7, MAPK8IP1/JIP1, MAPK8/JNK1 and MAPK9/JNK2. Found in a complex with RAC1, MAP3K11/MLK3, MAP2K7/MKK7, MAPK8IP1/JIP1 and MAPK8/JNK1. Interacts with SH3RF2. Phosphorylated at Ser-304 by AKT1 and AKT2. When phosphorylated, it has reduced ability to bind Rac. In terms of processing, autoubiquitinated. Ubiquitinated by SH3RF2, leading to proteasome-mediated degradation.

Its subcellular location is the cytoplasm. It localises to the perinuclear region. The protein resides in the cell projection. It is found in the lamellipodium. The protein localises to the golgi apparatus. Its subcellular location is the trans-Golgi network. It catalyses the reaction S-ubiquitinyl-[E2 ubiquitin-conjugating enzyme]-L-cysteine + [acceptor protein]-L-lysine = [E2 ubiquitin-conjugating enzyme]-L-cysteine + N(6)-ubiquitinyl-[acceptor protein]-L-lysine.. The protein operates within protein modification; protein ubiquitination. In terms of biological role, has E3 ubiquitin-protein ligase activity. In the absence of an external substrate, it can catalyze self-ubiquitination. Stimulates ubiquitination of potassium channel KCNJ1, enhancing it's dynamin-dependent and clathrin-independent endocytosis. Acts as a scaffold protein that coordinates with MAPK8IP1/JIP1 in organizing different components of the JNK pathway, including RAC1 or RAC2, MAP3K11/MLK3 or MAP3K7/TAK1, MAP2K7/MKK7, MAPK8/JNK1 and/or MAPK9/JNK2 into a functional multiprotein complex to ensure the effective activation of the JNK signaling pathway. Regulates the differentiation of CD4(+) and CD8(+) T-cells and promotes T-helper 1 (Th1) cell differentiation. Regulates the activation of MAPK8/JNK1 and MAPK9/JNK2 in CD4(+) T-cells and the activation of MAPK8/JNK1 in CD8(+) T-cells. Controls proper cortical neuronal migration and the formation of proximal cytoplasmic dilation in the leading process (PCDLP) in migratory neocortical neurons by regulating the proper localization of activated RAC1 and F-actin assembly. The protein is E3 ubiquitin-protein ligase SH3RF1 (SH3RF1) of Pongo abelii (Sumatran orangutan).